Consider the following 192-residue polypeptide: ER protein translocation subcomplex subunit sec67 (192 aa).

Component of the heterotetrameric Sec62/63complex composed of sec62, sec63, sec66 and sec72. The Sec62/63 complex associates with the Sec61 complex to form the Sec complex.

Its subcellular location is the cytoplasm. The protein localises to the nucleus. In terms of biological role, acts as a non-essential component of the Sec62/63 complex which is involved in SRP-independent post-translational translocation across the endoplasmic reticulum (ER) and functions together with the Sec61 complex and bip1 in a channel-forming translocon complex. A cycle of assembly and disassembly of Sec62/63 complex from sec61 may govern the activity of the translocon. sec72 may be involved in signal peptide recognition for a defined subset of leader peptides, or may increase the efficiency of unusual or 'difficult' secretory precursors to the translocation pore, it may be that this protein binds charged leader peptides to the membrane until they engage the translocation apparatus. In Schizosaccharomyces pombe (strain 972 / ATCC 24843) (Fission yeast), this protein is ER protein translocation subcomplex subunit sec67 (sec67).